The primary structure comprises 180 residues: Regulator of G-protein signaling 8 (180 aa).

The residue at position 26 (Ser-26) is a Phosphoserine. The 116-residue stretch at 56-171 (SFDVLLSHKY…FLRSKMYLDL (116 aa)) folds into the RGS domain.

In terms of assembly, interacts with GNAO1. Interacts with GNAI3.

It localises to the cell membrane. The protein resides in the membrane. It is found in the perikaryon. The protein localises to the cell projection. Its subcellular location is the dendrite. It localises to the nucleus. Regulates G protein-coupled receptor signaling cascades, including signaling via muscarinic acetylcholine receptor CHRM2 and dopamine receptor DRD2. Inhibits signal transduction by increasing the GTPase activity of G protein alpha subunits, thereby driving them into their inactive GDP-bound form. Modulates the activity of potassium channels that are activated in response to DRD2 and CHRM2 signaling. This Homo sapiens (Human) protein is Regulator of G-protein signaling 8 (RGS8).